Consider the following 89-residue polypeptide: UPF0335 protein OCAR_5086/OCA5_c28780 (89 aa).

Belongs to the UPF0335 family.

This chain is UPF0335 protein OCAR_5086/OCA5_c28780, found in Afipia carboxidovorans (strain ATCC 49405 / DSM 1227 / KCTC 32145 / OM5) (Oligotropha carboxidovorans).